Reading from the N-terminus, the 198-residue chain is MPRVAIIIYTLYGHVAATAEAEKKGIEAAGGSADIYQVEETLSPEVVKALGGAPKPDYPIATQDTLTEYDAFLFGIPTRFGNFPAQWKAFWDRTGGLWAKGALHGKVAGCFVSTGTGGGNEATIMNSLSTLAHHGIIFVPLGYKNVFAELTNMDEVHGGSPWGAGTIAGSDGSRSPSALELQVHEIQGKTFYETVAKF.

The signal sequence occupies residues Met-1–Ala-21. In terms of domain architecture, Flavodoxin-like spans Glu-22 to Phe-191.

The protein belongs to the WrbA family.

The protein localises to the secreted. This is Protoplast secreted protein 2 (PST2) from Saccharomyces cerevisiae (strain ATCC 204508 / S288c) (Baker's yeast).